The following is a 759-amino-acid chain: Zinc finger protein 287 (759 aa).

In terms of domain architecture, SCAN box spans Arg42–Leu124. The segment at Glu127–Ala154 is disordered. A KRAB domain is found at Val166–Pro234. C2H2-type zinc fingers lie at residues Tyr366–His388, Tyr394–His416, Tyr422–His444, Tyr450–His472, Tyr478–His500, Tyr506–His528, Tyr534–His556, Tyr562–His584, Tyr590–His612, Tyr618–His640, Phe646–His668, Tyr674–His696, Tyr702–His724, and Tyr730–His752.

This sequence belongs to the krueppel C2H2-type zinc-finger protein family. As to expression, expressed in brain and at low levels in kidney and spleen and few hematopoietic cell lines.

Its subcellular location is the nucleus. Its function is as follows. May be involved in transcriptional regulation. The protein is Zinc finger protein 287 of Mus musculus (Mouse).